The following is a 460-amino-acid chain: ATP synthase subunit beta (460 aa).

Residue 150 to 157 (GGAGVGKT) participates in ATP binding.

The protein belongs to the ATPase alpha/beta chains family. As to quaternary structure, F-type ATPases have 2 components, CF(1) - the catalytic core - and CF(0) - the membrane proton channel. CF(1) has five subunits: alpha(3), beta(3), gamma(1), delta(1), epsilon(1). CF(0) has three main subunits: a(1), b(2) and c(9-12). The alpha and beta chains form an alternating ring which encloses part of the gamma chain. CF(1) is attached to CF(0) by a central stalk formed by the gamma and epsilon chains, while a peripheral stalk is formed by the delta and b chains.

The protein localises to the cell inner membrane. The enzyme catalyses ATP + H2O + 4 H(+)(in) = ADP + phosphate + 5 H(+)(out). Functionally, produces ATP from ADP in the presence of a proton gradient across the membrane. The catalytic sites are hosted primarily by the beta subunits. In Salmonella paratyphi A (strain ATCC 9150 / SARB42), this protein is ATP synthase subunit beta.